A 236-amino-acid chain; its full sequence is Peroxisomal coenzyme A diphosphatase NUDT7 (236 aa).

Lys20 is modified (N6-succinyllysine). Residues 37–169 (SNKFSVLVPL…QKQITQSGRD (133 aa)) enclose the Nudix hydrolase domain. The Nudix box signature appears at 77-98 (KRDPVDTDDTATALREAQEEVG). Mg(2+) contacts are provided by Glu92 and Glu96. The residue at position 178 (Lys178) is an N6-succinyllysine. Residues 234–236 (SKL) carry the Microbody targeting signal motif.

Belongs to the Nudix hydrolase family. PCD1 subfamily. As to quaternary structure, monomer. Mn(2+) is required as a cofactor. It depends on Mg(2+) as a cofactor. In terms of tissue distribution, highly expressed in liver, brown adipose tissue and heart. Expressed at intermediate level in lung and kidney and at low level in brain. As to expression, expressed in liver, brown adipose tissue and heart at 20 times lower levels than isoform 1.

It is found in the peroxisome. The catalysed reaction is hexanoyl-CoA + H2O = hexanoyl-4'-phosphopantetheine + adenosine 3',5'-bisphosphate + 2 H(+). It catalyses the reaction octanoyl-CoA + H2O = S-octanoyl-4'-phosphopantetheine + adenosine 3',5'-bisphosphate + 2 H(+). The enzyme catalyses butanoyl-CoA + H2O = S-butanoyl-4'-phosphopantetheine + adenosine 3',5'-bisphosphate + 2 H(+). It carries out the reaction decanoyl-CoA + H2O = decanoyl-4'-phosphopantetheine + adenosine 3',5'-bisphosphate + 2 H(+). The catalysed reaction is dodecanoyl-CoA + H2O = S-dodecanoyl-4'-phosphopantetheine + adenosine 3',5'-bisphosphate + 2 H(+). It catalyses the reaction tetradecanoyl-CoA + H2O = tetradecanoyl-4'-phosphopantetheine + adenosine 3',5'-bisphosphate + 2 H(+). The enzyme catalyses choloyl-CoA + H2O = S-choloyl-4'-phosphopantetheine + adenosine 3',5'-bisphosphate + 2 H(+). It carries out the reaction 3alpha,7alpha,12alpha-trihydroxy-5beta-cholestan-26-oyl-CoA + H2O = 3alpha,7alpha,12alpha-trihydroxy-5beta-cholestan-26-oyl-4'-phosphopantetheine + adenosine 3',5'-bisphosphate + 2 H(+). The catalysed reaction is acetyl-CoA + H2O = S-acetyl-4'-phosphopantetheine + adenosine 3',5'-bisphosphate + 2 H(+). It catalyses the reaction CoA + H2O = (R)-4'-phosphopantetheine + adenosine 3',5'-bisphosphate + 2 H(+). The enzyme catalyses propanoyl-CoA + H2O = propanoyl-4'-phosphopantetheine + adenosine 3',5'-bisphosphate + 2 H(+). It carries out the reaction malonyl-CoA + H2O = malonyl-4'-phosphopantetheine + adenosine 3',5'-bisphosphate + 2 H(+). The catalysed reaction is succinyl-CoA + H2O = succinyl-4'-phosphopantetheine + adenosine 3',5'-bisphosphate + 2 H(+). It catalyses the reaction a 5'-end CoA-ribonucleoside in mRNA + H2O = a 5'-end phospho-adenosine-phospho-ribonucleoside in mRNA + (R)-4'-phosphopantetheine + 2 H(+). With respect to regulation, inhibited by fluoride. Its function is as follows. Fatty acyl-coenzyme A (CoA) diphosphatase that hydrolyzes fatty acyl-CoA to yield acyl-4'-phosphopantetheine and adenosine 3',5'-bisphosphate. Cleaves CoA, CoA esters and oxidized CoA with similar efficiencies. Preferentially hydrolyzes medium-chain acyl-CoAs and bile acid-CoAs. Has no activity toward NDP-sugars, CDP-alcohols, (deoxy)nucleoside 5'-triphosphates, nucleoside 5'-di or monophosphates, diadenosine polyphosphates, NAD, NADH, NADP, NADPH or thymidine-5'-monophospho-p-nitrophenyl ester. May be required to eliminate oxidized CoA from peroxisomes, or regulate CoA and acyl-CoA levels in this organelle in response to metabolic demand. Does not play a role in U8 snoRNA decapping activity. Binds U8 snoRNA. Exhibits decapping activity towards dpCoA-capped RNAs in vitro. The sequence is that of Peroxisomal coenzyme A diphosphatase NUDT7 from Mus musculus (Mouse).